We begin with the raw amino-acid sequence, 331 residues long: L-lactate dehydrogenase A chain (331 aa).

NAD(+)-binding positions include 29-57 (GMVG…MEDK) and R98. R105, N137, and R168 together coordinate substrate. N137 contributes to the NAD(+) binding site. H192 functions as the Proton acceptor in the catalytic mechanism. T247 provides a ligand contact to substrate.

It belongs to the LDH/MDH superfamily. LDH family. Homotetramer.

Its subcellular location is the cytoplasm. It catalyses the reaction (S)-lactate + NAD(+) = pyruvate + NADH + H(+). Its pathway is fermentation; pyruvate fermentation to lactate; (S)-lactate from pyruvate: step 1/1. Interconverts simultaneously and stereospecifically pyruvate and lactate with concomitant interconversion of NADH and NAD(+). In Harpagifer antarcticus (Antarctic spiny plunderfish), this protein is L-lactate dehydrogenase A chain (ldha).